The chain runs to 154 residues: Ribosome maturation factor RimP (154 aa).

This sequence belongs to the RimP family.

The protein resides in the cytoplasm. Its function is as follows. Required for maturation of 30S ribosomal subunits. The protein is Ribosome maturation factor RimP of Ruthia magnifica subsp. Calyptogena magnifica.